A 218-amino-acid polypeptide reads, in one-letter code: N-(5'-phosphoribosyl)anthranilate isomerase (218 aa).

Belongs to the TrpF family.

It carries out the reaction N-(5-phospho-beta-D-ribosyl)anthranilate = 1-(2-carboxyphenylamino)-1-deoxy-D-ribulose 5-phosphate. Its pathway is amino-acid biosynthesis; L-tryptophan biosynthesis; L-tryptophan from chorismate: step 3/5. In Rhodopseudomonas palustris (strain BisB18), this protein is N-(5'-phosphoribosyl)anthranilate isomerase.